The primary structure comprises 93 residues: Small ribosomal subunit protein uS15 (93 aa).

Belongs to the universal ribosomal protein uS15 family. Part of the 30S ribosomal subunit. Forms a bridge to the 50S subunit in the 70S ribosome, contacting the 23S rRNA.

One of the primary rRNA binding proteins, it binds directly to 16S rRNA where it helps nucleate assembly of the platform of the 30S subunit by binding and bridging several RNA helices of the 16S rRNA. Its function is as follows. Forms an intersubunit bridge (bridge B4) with the 23S rRNA of the 50S subunit in the ribosome. This chain is Small ribosomal subunit protein uS15, found in Ehrlichia canis (strain Jake).